A 1034-amino-acid chain; its full sequence is Putative beta-glucuronidase (1034 aa).

Glutamate 432 serves as the catalytic Proton donor. A CBM6 domain is found at 909–1034; that stretch reads VDISAEEGVL…GPFIDELFID (126 aa).

Belongs to the glycosyl hydrolase 2 family.

It is found in the cytoplasm. The catalysed reaction is a beta-D-glucuronoside + H2O = D-glucuronate + an alcohol. In terms of biological role, glycoside hydrolase that may be involved in ulvan degradation. Ulvan is the main polysaccharide component of the Ulvales (green seaweed) cell wall. It is composed of disaccharide building blocks comprising 3-sulfated rhamnose (Rha3S) linked to D-glucuronic acid (GlcA), L-iduronic acid (IduA), or D-xylose (Xyl). The polypeptide is Putative beta-glucuronidase (Formosa agariphila (strain DSM 15362 / KCTC 12365 / LMG 23005 / KMM 3901 / M-2Alg 35-1)).